We begin with the raw amino-acid sequence, 657 residues long: SAGA complex subunit SGF73 (657 aa).

Zn(2+) contacts are provided by Cys-78, Cys-81, His-93, and Cys-98. 4 disordered regions span residues 98–225 (CAGA…TEKH), 287–353 (EKRA…VNLT), 469–532 (QQQQ…SQDT), and 572–636 (ESNQ…NVSG). Basic and acidic residues predominate over residues 107-118 (TDPRDESTRETI). Residues 131–163 (DDDNSNDNNNDDDDDDDNDDNEDDDDADDDDDN) show a composition bias toward acidic residues. 2 stretches are compositionally biased toward polar residues: residues 174–193 (SSFN…TPNM) and 200–210 (TGTPQTFSSSI). The SCA7 domain occupies 220–286 (NPTEKHLIDF…EHQTKIGAAA (67 aa)). Over residues 306–321 (QKKHTQQQKQGQRSKQ) the composition is skewed to basic residues. Composition is skewed to low complexity over residues 325–336 (NGGKSAKNGGKS) and 469–493 (QQQQ…QPTQ). A compositionally biased stretch (polar residues) spans 504–516 (ATNSSFNANVSSK). A compositionally biased stretch (low complexity) spans 517–526 (QIQQQQQQQQ). Polar residues predominate over residues 572 to 583 (ESNQDSHLSGTH). Residues 584–594 (NNNSSKNGNNN) show a composition bias toward low complexity. Over residues 600–636 (ASISSPNTSVNSIQSPPSVNSVNGSGQGVSTGINVSG) the composition is skewed to polar residues.

Belongs to the ataxin-7 family. As to quaternary structure, component of the 1.8 MDa SAGA (Spt-Ada-Gcn5 acetyltransferase) complex, which is composed of 19 subunits TRA1, SPT7, TAF5, NGG1/ADA3, SGF73, SPT20/ADA5, SPT8, TAF12, TAF6, HFI1/ADA1, UBP8, GCN5, ADA2, SPT3, SGF29, TAF10, TAF9, SGF11 and SUS1. The SAGA complex is composed of 4 modules, namely the HAT (histone acetyltransferase) module (GCN5, ADA2, NGG1/ADA3 and SGF29), the DUB (deubiquitinating) module (UBP8, SGF11, SGF73 and SUS1), the core or TAF (TBP-associated factor) module (TAF5, TAF6, TAF9, TAF10 and TAF12), and the Tra1 or SPT (Suppressor of Ty) module (TRA1, HFI1/ADA1, SPT3, SPT7, SPT8 and SPT20/ADA5). The Tra1/SPT module binds activators, the core module recruits TBP (TATA-binding protein), the HAT module contains the histone H3 acetyltransferase GCN5, and the DUB module comprises the histone H2B deubiquitinase UBP8. Also identified in an altered form of SAGA, named SALSA (SAGA altered, Spt8 absent) or SLIK (SAGA-like) complex, which contains a C-terminal truncated form of SPT7 and is missing SPT8. However, it has been shown that the SAGA and SAGA-like SALSA/SLIK transcriptional coactivators are structurally and biochemically equivalent.

It localises to the nucleus. Its subcellular location is the cytoplasm. In terms of biological role, component of the transcription coactivator SAGA complex. SAGA acts as a general cofactor required for essentially all RNA polymerase II transcription. At the promoters, SAGA is required for transcription pre-initiation complex (PIC) recruitment. It influences RNA polymerase II transcriptional activity through different activities such as TBP interaction (via core/TAF module) and promoter selectivity, interaction with transcription activators (via Tra1/SPT module), and chromatin modification through histone acetylation (via HAT module) and deubiquitination (via DUB module). SAGA preferentially acetylates histones H3 (to form H3K9ac, H3K14ac, H3K18ac and H3K23ac) and H2B and deubiquitinates histone H2B. SAGA interacts with DNA via upstream activating sequences (UASs). Also identified in a modified version of SAGA named SALSA or SLIK. The cleavage of SPT7 and the absence of the SPT8 subunit in SLIK neither drive any major conformational differences in its structure compared with SAGA, nor significantly affect HAT, DUB, or DNA-binding activities. SGF73 tethers the DUB module to the rest of the SAGA complex through its central domain and activates the ubiquitin hydrolase UBP8 by maintaining its catalytic domain in an active conformation. SGF73 mediates recruitment of the TREX-2 mRNA export factors SAC3 and THP1 to SAGA, which is crucial to target TREX-2 to the nuclear pore complex (NPC) necessary for export of mRNA. Upon environmental stress, involved in the bypass of the canonical mRNA export process for the immediate export of stress-related transcripts to maintain proteostasis. This is SAGA complex subunit SGF73 (SGF73) from Saccharomyces cerevisiae (strain ATCC 204508 / S288c) (Baker's yeast).